The primary structure comprises 479 residues: Ammonium transporter 3 member 2 (479 aa).

Helical transmembrane passes span 34 to 54, 59 to 79, 139 to 159, 164 to 184, 202 to 222, 237 to 257, 272 to 292, 297 to 317, 321 to 341, 355 to 375, and 407 to 427; these read VAAT…YGGV, WAVN…ICWV, VVYF…GSLL, FLAW…VGAF, GGYV…YWVG, ILFT…FNGG, NTNI…VIFF, VVGA…AAGV, WAAL…MMIL, LGVF…TGLF, and IAGG…ICLA.

It belongs to the ammonia transporter channel (TC 1.A.11.2) family.

The protein localises to the membrane. In terms of biological role, involved in ammonium transport. This Oryza sativa subsp. japonica (Rice) protein is Ammonium transporter 3 member 2 (AMT3-2).